The chain runs to 721 residues: DNA ligase (721 aa).

NAD(+) is bound by residues 42 to 46 (DAEYD), 91 to 92 (SL), and Glu-125. Lys-127 (N6-AMP-lysine intermediate) is an active-site residue. NAD(+) contacts are provided by Arg-148, Glu-184, Lys-300, and Lys-324. Residues Cys-430, Cys-433, Cys-448, and Cys-454 each contribute to the Zn(2+) site. In terms of domain architecture, BRCT spans 642-721 (STGSPVEGKT…DAWFTLVGEE (80 aa)).

The protein belongs to the NAD-dependent DNA ligase family. LigA subfamily. Mg(2+) serves as cofactor. Requires Mn(2+) as cofactor.

It catalyses the reaction NAD(+) + (deoxyribonucleotide)n-3'-hydroxyl + 5'-phospho-(deoxyribonucleotide)m = (deoxyribonucleotide)n+m + AMP + beta-nicotinamide D-nucleotide.. Its function is as follows. DNA ligase that catalyzes the formation of phosphodiester linkages between 5'-phosphoryl and 3'-hydroxyl groups in double-stranded DNA using NAD as a coenzyme and as the energy source for the reaction. It is essential for DNA replication and repair of damaged DNA. The sequence is that of DNA ligase from Brucella anthropi (strain ATCC 49188 / DSM 6882 / CCUG 24695 / JCM 21032 / LMG 3331 / NBRC 15819 / NCTC 12168 / Alc 37) (Ochrobactrum anthropi).